The following is a 391-amino-acid chain: Formate-dependent phosphoribosylglycinamide formyltransferase (391 aa).

N(1)-(5-phospho-beta-D-ribosyl)glycinamide-binding positions include 18-19 and E78; that span reads EL. Residues R110, K151, 156-161, 191-194, and E199 each bind ATP; these read SSGKGQ and EEFI. The 191-residue stretch at 115–305 folds into the ATP-grasp domain; that stretch reads ELAHEELGIR…EFELHLRAIL (191 aa). 2 residues coordinate Mg(2+): E264 and E276. Residues D283, K353, and 360-361 each bind N(1)-(5-phospho-beta-D-ribosyl)glycinamide; that span reads RR.

Belongs to the PurK/PurT family. Homodimer.

The catalysed reaction is N(1)-(5-phospho-beta-D-ribosyl)glycinamide + formate + ATP = N(2)-formyl-N(1)-(5-phospho-beta-D-ribosyl)glycinamide + ADP + phosphate + H(+). The protein operates within purine metabolism; IMP biosynthesis via de novo pathway; N(2)-formyl-N(1)-(5-phospho-D-ribosyl)glycinamide from N(1)-(5-phospho-D-ribosyl)glycinamide (formate route): step 1/1. Involved in the de novo purine biosynthesis. Catalyzes the transfer of formate to 5-phospho-ribosyl-glycinamide (GAR), producing 5-phospho-ribosyl-N-formylglycinamide (FGAR). Formate is provided by PurU via hydrolysis of 10-formyl-tetrahydrofolate. The chain is Formate-dependent phosphoribosylglycinamide formyltransferase from Trichormus variabilis (strain ATCC 29413 / PCC 7937) (Anabaena variabilis).